Reading from the N-terminus, the 180-residue chain is ATP synthase subunit b, plastid (180 aa).

The chain crosses the membrane as a helical span at residues 27-49; it reads LVTTLINIAVVLSLLIVFGKGFL.

It belongs to the ATPase B chain family. In terms of assembly, F-type ATPases have 2 components, F(1) - the catalytic core - and F(0) - the membrane proton channel. F(1) has five subunits: alpha(3), beta(3), gamma(1), delta(1), epsilon(1). F(0) has four main subunits: a(1), b(1), b'(1) and c(10-14). The alpha and beta chains form an alternating ring which encloses part of the gamma chain. F(1) is attached to F(0) by a central stalk formed by the gamma and epsilon chains, while a peripheral stalk is formed by the delta, b and b' chains.

The protein localises to the plastid membrane. Its function is as follows. F(1)F(0) ATP synthase produces ATP from ADP in the presence of a proton or sodium gradient. F-type ATPases consist of two structural domains, F(1) containing the extramembraneous catalytic core and F(0) containing the membrane proton channel, linked together by a central stalk and a peripheral stalk. During catalysis, ATP synthesis in the catalytic domain of F(1) is coupled via a rotary mechanism of the central stalk subunits to proton translocation. Functionally, component of the F(0) channel, it forms part of the peripheral stalk, linking F(1) to F(0). In Cuscuta gronovii (Common dodder), this protein is ATP synthase subunit b, plastid.